Consider the following 882-residue polypeptide: Valine--tRNA ligase (882 aa).

The short motif at 45-55 is the 'HIGH' region element; the sequence is PNVTGKLHLGH. Positions 519-523 match the 'KMSKS' region motif; the sequence is KMSKS. K522 contacts ATP. Residues 808–877 are a coiled coil; sequence LADLLNVEEE…DATQERIVEM (70 aa).

Belongs to the class-I aminoacyl-tRNA synthetase family. ValS type 1 subfamily. In terms of assembly, monomer.

Its subcellular location is the cytoplasm. It catalyses the reaction tRNA(Val) + L-valine + ATP = L-valyl-tRNA(Val) + AMP + diphosphate. Catalyzes the attachment of valine to tRNA(Val). As ValRS can inadvertently accommodate and process structurally similar amino acids such as threonine, to avoid such errors, it has a 'posttransfer' editing activity that hydrolyzes mischarged Thr-tRNA(Val) in a tRNA-dependent manner. The chain is Valine--tRNA ligase from Streptococcus pyogenes serotype M6 (strain ATCC BAA-946 / MGAS10394).